Reading from the N-terminus, the 82-residue chain is Omega-conotoxin-like TxO6 (82 aa).

Positions 1–22 are cleaved as a signal peptide; sequence MKLTCVVIVAVLFLTAWTLVMA. Residues 23-50 constitute a propeptide that is removed on maturation; sequence DDSNNGLANLFSKSRDEMEDPEAAKLEK. 3 disulfides stabilise this stretch: C53-C71, C60-C76, and C70-C81.

The protein belongs to the conotoxin O1 superfamily. In terms of tissue distribution, expressed by the venom duct.

The protein resides in the secreted. Its function is as follows. Omega-conotoxins act at presynaptic membranes, they bind and block voltage-gated calcium channels (Cav). In Conus textile (Cloth-of-gold cone), this protein is Omega-conotoxin-like TxO6.